The primary structure comprises 145 residues: MKYLAQFPSILAIYCFCLLQIPSSGFPRPLADASDGLDIVKFEQMAYWASLSRQPKDNQDIYKRFLFHYSRTQEPAHPVKTGFPPVHPLMRLAAKLADRRMKTFWRRDSRATAADFTKKDYTATLGRPFFLFRPRNGRNLDFDTW.

The first 25 residues, 1-25 (MKYLAQFPSILAIYCFCLLQIPSSG), serve as a signal peptide directing secretion. 3 consecutive propeptides follow at residues 26 to 64 (FPRP…IYKR), 65 to 100 (FLFH…ADRR), and 101 to 103 (MKT). Asparagine 136 carries the asparagine amide modification. Positions 139–145 (NLDFDTW) are excised as a propeptide.

The protein belongs to the NmU family.

It localises to the secreted. Implicated in the regulation of circadian rhythms through autocrine and/or paracrine actions. The polypeptide is Neuromedin-S (NMS) (Bos taurus (Bovine)).